Consider the following 207-residue polypeptide: Small ribosomal subunit protein uS4c (207 aa).

Residues 92–156 enclose the S4 RNA-binding domain; that stretch reads MRLDNILFRL…YQSIITKRIE (65 aa).

It belongs to the universal ribosomal protein uS4 family. As to quaternary structure, part of the 30S ribosomal subunit. Contacts protein S5. The interaction surface between S4 and S5 is involved in control of translational fidelity.

It is found in the plastid. The protein resides in the chloroplast. One of the primary rRNA binding proteins, it binds directly to 16S rRNA where it nucleates assembly of the body of the 30S subunit. Functionally, with S5 and S12 plays an important role in translational accuracy. The chain is Small ribosomal subunit protein uS4c (rps4) from Equisetum palustre (Marsh horsetail).